We begin with the raw amino-acid sequence, 325 residues long: Palmitoyltransferase PFA3 (325 aa).

The Cytoplasmic segment spans residues 1-8 (MHICSLIP). A helical membrane pass occupies residues 9-29 (ILFPKLLTCGLALYSAVVLWL). A topological domain (lumenal) is located at residue K30. A helical membrane pass occupies residues 31-51 (VSVIGSFIQGTVLLTLVPLIL). Residues 52 to 147 (YAYFSTIAVG…PGCIGYNNHK (96 aa)) are Cytoplasmic-facing. The region spanning 104–154 (RYCVKCKVWKPDRCHHCSACDKCYLRRDHHCVWFPGCIGYNNHKFFLHFLL) is the DHHC domain. A helical membrane pass occupies residues 148 to 168 (FFLHFLLYASVYAFWICIITT). Over 169–188 (WDLVVWFRAHSYERELLNVH) the chain is Lumenal. The chain crosses the membrane as a helical span at residues 189 to 209 (LVCLWALSAAATVALTAFCAF). Residues 210–325 (NIYLVCKNET…TRFNSKRAVQ (116 aa)) are Cytoplasmic-facing.

This sequence belongs to the DHHC palmitoyltransferase family. PFA3 subfamily. Autopalmitoylated.

It localises to the vacuole membrane. It carries out the reaction L-cysteinyl-[protein] + hexadecanoyl-CoA = S-hexadecanoyl-L-cysteinyl-[protein] + CoA. Functionally, palmitoyltransferase specific for VAC8. Palmitoylates VAC8 at one or more of its N-terminal cysteine residues, which is required for its proper membrane localization. The protein is Palmitoyltransferase PFA3 (PFA3) of Eremothecium gossypii (strain ATCC 10895 / CBS 109.51 / FGSC 9923 / NRRL Y-1056) (Yeast).